Here is a 169-residue protein sequence, read N- to C-terminus: MTRKSRRLILIAACGAVLALALGLILSAMSGSIVFFRSPAEVASQGVPPGTRFRLGGLVKDGSVKRGPDQNVEFSVTDTNATVPVQYRGLLPDLFREGQGIVAEGTLDAGGVFRADTVLAKHDENYMPREVADALKAQGRWQEGGGKEAPKDAAKPASADATLGQRSER.

The Cytoplasmic portion of the chain corresponds to M1–R7. Residues L8–A28 traverse the membrane as a helical; Signal-anchor for type II membrane protein segment. Residues M29 to R169 lie on the Periplasmic side of the membrane. 2 residues coordinate heme: H122 and Y126. Residues L135–R169 are disordered. Residues G145–A154 are compositionally biased toward basic and acidic residues.

Belongs to the CcmE/CycJ family.

Its subcellular location is the cell inner membrane. Its function is as follows. Heme chaperone required for the biogenesis of c-type cytochromes. Transiently binds heme delivered by CcmC and transfers the heme to apo-cytochromes in a process facilitated by CcmF and CcmH. In Methylorubrum populi (strain ATCC BAA-705 / NCIMB 13946 / BJ001) (Methylobacterium populi), this protein is Cytochrome c-type biogenesis protein CcmE.